A 258-amino-acid chain; its full sequence is Acyl-[acyl-carrier-protein]--UDP-N-acetylglucosamine O-acyltransferase (258 aa).

It belongs to the transferase hexapeptide repeat family. LpxA subfamily. As to quaternary structure, homotrimer.

The protein localises to the cytoplasm. It carries out the reaction a (3R)-hydroxyacyl-[ACP] + UDP-N-acetyl-alpha-D-glucosamine = a UDP-3-O-[(3R)-3-hydroxyacyl]-N-acetyl-alpha-D-glucosamine + holo-[ACP]. It functions in the pathway glycolipid biosynthesis; lipid IV(A) biosynthesis; lipid IV(A) from (3R)-3-hydroxytetradecanoyl-[acyl-carrier-protein] and UDP-N-acetyl-alpha-D-glucosamine: step 1/6. In terms of biological role, involved in the biosynthesis of lipid A, a phosphorylated glycolipid that anchors the lipopolysaccharide to the outer membrane of the cell. This chain is Acyl-[acyl-carrier-protein]--UDP-N-acetylglucosamine O-acyltransferase, found in Pseudomonas putida (strain GB-1).